The primary structure comprises 147 residues: Protein SprT-like (147 aa).

The SprT-like domain maps to 5–142 (DYVNEVSLED…SFCRGHLKEI (138 aa)). His-64 contributes to the Zn(2+) binding site. The active site involves Glu-65. Zn(2+) is bound at residue His-68.

Belongs to the SprT family. Zn(2+) serves as cofactor.

The protein localises to the cytoplasm. The protein is Protein SprT-like of Streptococcus uberis (strain ATCC BAA-854 / 0140J).